Consider the following 281-residue polypeptide: 2,3,4,5-tetrahydropyridine-2,6-dicarboxylate N-succinyltransferase (281 aa).

The protein belongs to the transferase hexapeptide repeat family.

It localises to the cytoplasm. It catalyses the reaction (S)-2,3,4,5-tetrahydrodipicolinate + succinyl-CoA + H2O = (S)-2-succinylamino-6-oxoheptanedioate + CoA. The protein operates within amino-acid biosynthesis; L-lysine biosynthesis via DAP pathway; LL-2,6-diaminopimelate from (S)-tetrahydrodipicolinate (succinylase route): step 1/3. The polypeptide is 2,3,4,5-tetrahydropyridine-2,6-dicarboxylate N-succinyltransferase (Afipia carboxidovorans (strain ATCC 49405 / DSM 1227 / KCTC 32145 / OM5) (Oligotropha carboxidovorans)).